The primary structure comprises 382 residues: Flap endonuclease 1 (382 aa).

Residues 1-104 (MGIKGLSQVI…GELEKRSERR (104 aa)) are N-domain. Aspartate 34 provides a ligand contact to Mg(2+). 2 residues coordinate DNA: arginine 47 and arginine 70. Aspartate 86, glutamate 158, glutamate 160, aspartate 179, and aspartate 181 together coordinate Mg(2+). The interval 122–253 (EAEKFERRLV…KKAVELIRQH (132 aa)) is I-domain. DNA is bound at residue glutamate 158. DNA contacts are provided by glycine 231 and aspartate 233. Aspartate 233 contacts Mg(2+). Residues 336–344 (TQGRIDSFF) form an interaction with PCNA region. The tract at residues 358–382 (KRKAEEAEKAKKGAKKGGPPKKRAK) is disordered. The segment covering 359–368 (RKAEEAEKAK) has biased composition (basic and acidic residues). Over residues 369 to 382 (KGAKKGGPPKKRAK) the composition is skewed to basic residues.

This sequence belongs to the XPG/RAD2 endonuclease family. FEN1 subfamily. In terms of assembly, interacts with PCNA. Three molecules of crn-1 bind to one PCNA trimer with each molecule binding to one PCNA monomer. PCNA stimulates the nuclease activity without altering cleavage specificity. Interacts with cps-6. It depends on Mg(2+) as a cofactor. In terms of processing, phosphorylated. Phosphorylation upon DNA damage induces relocalization to the nuclear plasma.

It localises to the nucleus. The protein resides in the nucleolus. Its subcellular location is the nucleoplasm. The protein localises to the mitochondrion. Structure-specific nuclease with 5'-flap endonuclease and 5'-3' exonuclease activities involved in DNA replication and repair. During DNA replication, cleaves the 5'-overhanging flap structure that is generated by displacement synthesis when DNA polymerase encounters the 5'-end of a downstream Okazaki fragment. It enters the flap from the 5'-end and then tracks to cleave the flap base, leaving a nick for ligation. Also involved in the long patch base excision repair (LP-BER) pathway, by cleaving within the apurinic/apyrimidinic (AP) site-terminated flap. Acts as a genome stabilization factor that prevents flaps from equilibrating into structures that lead to duplications and deletions. Also possesses 5'-3' exonuclease activity on nicked or gapped double-stranded DNA, and exhibits RNase H activity. Also involved in replication and repair of rDNA and in repairing mitochondrial DNA. Can associate and cooperate with cps-6 to promote stepwise DNA fragmentation, utilizing the endonuclease activity of cps-6 and both of its own 5'-3' exonuclease activity and gap-dependent endonuclease activity. May play a critical role in switching the state of cells from DNA replication/repair to DNA degradation during apoptosis. This Caenorhabditis elegans protein is Flap endonuclease 1.